The following is a 282-amino-acid chain: Heme oxygenase 1, chloroplastic (282 aa).

A chloroplast-targeting transit peptide spans 1-54 (MAYLAPISSSLSIFKNPQLSRFQFSSSSPNPLFLRPRIQILSMTMNKSPSLVVV). H86 lines the heme b pocket.

It belongs to the heme oxygenase family. In terms of tissue distribution, widely expressed.

The protein localises to the plastid. It is found in the chloroplast. The enzyme catalyses heme b + 3 reduced [NADPH--hemoprotein reductase] + 3 O2 = biliverdin IXalpha + CO + Fe(2+) + 3 oxidized [NADPH--hemoprotein reductase] + 3 H2O + H(+). Its activity is regulated as follows. Activated by ascorbate. Key enzyme in the synthesis of the chromophore of the phytochrome family of plant photoreceptors. Catalyzes the opening of the heme ring to form the open-chain tetrapyrrole biliverdin IX with the release of iron and carbon monoxide (CO). Produces specifically the biliverdin IX-alpha isomer. Can form complex with heme, is ferredoxin-dependent and its activity is increased in the presence of ascorbate. Plays a role in salt acclimation signaling. May affect the plastid-to-nucleus signaling pathway by perturbing tetrapyrrole synthesis. The plastid-to-nucleus signal plays an important role in the coordinated expression of both nuclear- and chloroplast-localized genes that encode photosynthesis-related proteins. This chain is Heme oxygenase 1, chloroplastic (HO1), found in Arabidopsis thaliana (Mouse-ear cress).